A 372-amino-acid chain; its full sequence is Probable arabinan endo-1,5-alpha-L-arabinosidase B (372 aa).

The first 16 residues, 1-16 (MTVLVALFCLVTWTLC), serve as a signal peptide directing secretion. The span at 23–34 (STQGTQQPQQPE) shows a compositional bias: low complexity. Positions 23–52 (STQGTQQPQQPEKTPHPHPQPEDAFPPTHA) are disordered. D59 acts as the Proton acceptor in catalysis. A glycan (N-linked (GlcNAc...) asparagine) is linked at N120. The active-site Proton donor is E252. N-linked (GlcNAc...) asparagine glycosylation is present at N363.

It belongs to the glycosyl hydrolase 43 family.

The protein localises to the secreted. The catalysed reaction is Endohydrolysis of (1-&gt;5)-alpha-arabinofuranosidic linkages in (1-&gt;5)-arabinans.. The protein operates within glycan metabolism; L-arabinan degradation. In terms of biological role, endo-1,5-alpha-L-arabinanase involved in degradation of pectin. Its preferred substrate is linear 1,5-alpha-L-arabinan. This chain is Probable arabinan endo-1,5-alpha-L-arabinosidase B (abnB), found in Aspergillus fumigatus (strain CBS 144.89 / FGSC A1163 / CEA10) (Neosartorya fumigata).